The following is a 1156-amino-acid chain: Nuclear pore complex protein Nup133 (1156 aa).

Met1 is modified (N-acetylmethionine). The interval 1–39 is disordered; the sequence is MFPAAPSPRTPGTGSRRGPLAGLGPGSTPRTASRKGLPL. Phosphoserine is present on residues Ser7 and Ser15. Arg17 carries the post-translational modification Omega-N-methylarginine. Position 27 is a phosphoserine (Ser27). Thr28 bears the Phosphothreonine mark. Arg30 bears the Omega-N-methylarginine mark. Phosphoserine occurs at positions 41, 45, 50, 72, 131, 480, 489, 493, 501, and 755. At Lys787 the chain carries N6-acetyllysine. Ser1133 is modified (phosphoserine).

The protein belongs to the nucleoporin Nup133 family. Forms part of the Nup160 subcomplex in the nuclear pore which is composed of NUP160, NUP133, NUP107 and Nup96. This complex plays a role in RNA export and in tethering Nup98 and NUP153 to the nucleus. In terms of tissue distribution, widely expressed in fetal and adult tissues. Expressed in the brain and kidney.

It is found in the nucleus. The protein localises to the nuclear pore complex. It localises to the chromosome. The protein resides in the centromere. Its subcellular location is the kinetochore. Involved in poly(A)+ RNA transport. Involved in nephrogenesis. The protein is Nuclear pore complex protein Nup133 (NUP133) of Homo sapiens (Human).